The primary structure comprises 427 residues: Enolase (427 aa).

Position 163 (Gln163) interacts with (2R)-2-phosphoglycerate. Residue Glu205 is the Proton donor of the active site. Residues Asp242, Glu285, and Asp312 each contribute to the Mg(2+) site. (2R)-2-phosphoglycerate-binding residues include Lys337, Arg366, Ser367, and Lys388. The active-site Proton acceptor is the Lys337.

It belongs to the enolase family. Mg(2+) serves as cofactor.

The protein localises to the cytoplasm. It localises to the secreted. The protein resides in the cell surface. The enzyme catalyses (2R)-2-phosphoglycerate = phosphoenolpyruvate + H2O. The protein operates within carbohydrate degradation; glycolysis; pyruvate from D-glyceraldehyde 3-phosphate: step 4/5. Its function is as follows. Catalyzes the reversible conversion of 2-phosphoglycerate (2-PG) into phosphoenolpyruvate (PEP). It is essential for the degradation of carbohydrates via glycolysis. The chain is Enolase from Thiobacillus denitrificans (strain ATCC 25259 / T1).